The sequence spans 379 residues: Cytochrome bd-I ubiquinol oxidase subunit 2 (379 aa).

Position 1 is an N-formylmethionine (Met1). The Cytoplasmic segment spans residues 1 to 8 (MIDYEVLR). The chain crosses the membrane as a helical span at residues 9-28 (FIWWLLVGVLLIGFAVTDGF). The Periplasmic segment spans residues 29–79 (DMGVGMLTRFLGRNDTERRIMINSIAPHWDGNQVWLITAGGALFAAWPMVY). The helical transmembrane segment at 80–99 (AAAFSGFYVAMILVLASLFF) threads the bilayer. At 100–122 (RPVGFDYRSKIEETRWRNMWDWG) the chain is on the cytoplasmic side. A helical membrane pass occupies residues 123–142 (IFIGSFVPPLVIGVAFGNLL). Over 143-164 (QGVPFNVDEYLRLYYTGNFFQL) the chain is Periplasmic. Residues 165–184 (LNPFGLLAGVVSVGMIITQG) traverse the membrane as a helical segment. Topologically, residues 185–205 (ATYLQMRTVGELHLRTRATAQ) are cytoplasmic. A helical membrane pass occupies residues 206–225 (VAALVTLVCFALAGVWVMYG). At 226–262 (IDGYVVKSTMDHYAASNPLNKEVVREAGAWLVNFNNT) the chain is on the periplasmic side. The chain crosses the membrane as a helical span at residues 263–282 (PILWAIPALGVVLPLLTILT). The Cytoplasmic portion of the chain corresponds to 283-292 (ARMDKAAWAF). The helical transmembrane segment at 293 to 312 (VFSSLTLACIILTAGIAMFP) threads the bilayer. Residues 313–336 (FVMPSSTMMNASLTMWDATSSQLT) lie on the Periplasmic side of the membrane. The helical transmembrane segment at 337 to 356 (LNVMTWVAVVLVPIILLYTA) threads the bilayer. The Cytoplasmic portion of the chain corresponds to 357-379 (WCYWKMFGRITKEDIERNTHSLY).

This sequence belongs to the cytochrome ubiquinol oxidase subunit 2 family. As to quaternary structure, heterodimer of subunits I and II. The cofactor is heme b. It depends on heme d cis-diol as a cofactor.

Its subcellular location is the cell inner membrane. The enzyme catalyses 2 a ubiquinol + O2(in) + 4 H(+)(in) = 2 a ubiquinone + 2 H2O(in) + 4 H(+)(out). It functions in the pathway energy metabolism; oxidative phosphorylation. In terms of biological role, a terminal oxidase that produces a proton motive force by the vectorial transfer of protons across the inner membrane. It is the component of the aerobic respiratory chain of E.coli that predominates when cells are grown at low aeration. Generates a proton motive force using protons and electrons from opposite sides of the membrane to generate H(2)O, transferring 1 proton/electron. The protein is Cytochrome bd-I ubiquinol oxidase subunit 2 (cydB) of Escherichia coli O157:H7.